Here is a 120-residue protein sequence, read N- to C-terminus: MATSMKLACVALVMCMVVIAPMAEAALSCGTVSGDLAPCLTYLQAPNNASPPPPCCAGVKKLLGAATTTPDRQAACNCLKSAAGSISRLNTNNAAALPGKCGVSIPYKISTSTNCNTIKF.

Positions 1–25 (MATSMKLACVALVMCMVVIAPMAEA) are cleaved as a signal peptide. Intrachain disulfides connect Cys29–Cys78, Cys39–Cys55, Cys56–Cys101, and Cys76–Cys115.

This sequence belongs to the plant LTP family. In terms of tissue distribution, expressed in roots, stem, leaves and tendrils of the mature plant.

In terms of biological role, plant non-specific lipid-transfer proteins transfer phospholipids as well as galactolipids across membranes. May play a role in wax or cutin deposition in the cell walls of expanding epidermal cells and certain secretory tissues. This Pisum sativum (Garden pea) protein is Non-specific lipid-transfer protein 2.